The sequence spans 63 residues: MKQSEIKDLSAAELQEKLSQTKKVYADLKMAHAISPIANPLRIRSVRRTVARLATELTKRELQ.

It belongs to the universal ribosomal protein uL29 family.

This Flavobacterium johnsoniae (strain ATCC 17061 / DSM 2064 / JCM 8514 / BCRC 14874 / CCUG 350202 / NBRC 14942 / NCIMB 11054 / UW101) (Cytophaga johnsonae) protein is Large ribosomal subunit protein uL29.